The chain runs to 426 residues: UPF0597 protein CLD_2825 (426 aa).

This sequence belongs to the UPF0597 family.

The sequence is that of UPF0597 protein CLD_2825 from Clostridium botulinum (strain Okra / Type B1).